We begin with the raw amino-acid sequence, 211 residues long: MREIMNKELLKKVIELKSNGLTIGEIAEELNVSMETARYLVLNAEKLLKEEEKAIKLENVDIFIDWKNIGSSANRLKYISSIIVDILKSRNIEFDTVVGVSTSGVPIATLVASELGKELTIYIPKKHISEEGKKITGSISQNFSAVNYKRAVIIDDVVTSGSTLKECIKQLKEVCSPKLVVVLIDKSGLDEIEGVPLIPLIRIGAVNVEQK.

It belongs to the purine/pyrimidine phosphoribosyltransferase family. GfcR subfamily.

The chain is Transcriptional regulator GfcR from Methanocaldococcus jannaschii (strain ATCC 43067 / DSM 2661 / JAL-1 / JCM 10045 / NBRC 100440) (Methanococcus jannaschii).